The following is a 259-amino-acid chain: MAVDREECVYMAKLAEQAERYDEMVEEMKKVAKLVHDQELSVEERNLLSVAYKNVIGARRASWRIISSIEQKEEAKGNEEHVQRIRKYRTVVEEELSKICASILQLLDDHLIPTASTGESKVFYLKMKGDYHRYLAEFKTGADRKEAAEHTLLAYKAAQDIALVDLPPTHPIRLGLALNFSVFYYEILNSPERACHLAKQAFDEAIAELDSLGEESYKDSTLIMQLLRDNLTLWTSDMQDPAAGDDREGADMKVEDAEP.

The disordered stretch occupies residues 238-259; sequence MQDPAAGDDREGADMKVEDAEP. Residues 244 to 259 are compositionally biased toward basic and acidic residues; the sequence is GDDREGADMKVEDAEP.

Belongs to the 14-3-3 family.

This is 14-3-3-like protein from Chlamydomonas reinhardtii (Chlamydomonas smithii).